A 324-amino-acid chain; its full sequence is Probable UDP-sugar transporter protein SLC35A4 (324 aa).

The Cytoplasmic segment spans residues 1 to 18; it reads MSVEDGGVPGLARPRQAR. The helical transmembrane segment at 19–39 threads the bilayer; sequence WTLLLFLSTAMYGAHAPFLAL. The Lumenal portion of the chain corresponds to 40–52; sequence CHVDGRVPFRPSS. The helical transmembrane segment at 53–73 threads the bilayer; sequence AVLLTELTKLLLCAFSLLVGW. Topologically, residues 74 to 85 are cytoplasmic; that stretch reads QTWPQGTPPWRQ. A helical membrane pass occupies residues 86-106; that stretch reads AVPFALSALLYGANNNLVIYL. The Lumenal portion of the chain corresponds to 107–142; it reads QRYMDPSTYQVLSNLKIGSTALLYCLCLGHRLSARQ. Residues 143 to 163 form a helical membrane-spanning segment; it reads GLALLLLMAAGACYASGGFQE. Over 164 to 180 the chain is Cytoplasmic; that stretch reads PVNTLPGPASAAGAHPM. Residues 181–201 traverse the membrane as a helical segment; the sequence is PLHITPLGLLLLILYCLISGL. Topologically, residues 202–214 are lumenal; sequence SSVYTELIMKRQR. Residues 215-235 form a helical membrane-spanning segment; sequence LPLALQNLFLYTFGVILNFGL. The Cytoplasmic portion of the chain corresponds to 236-248; it reads YAGSGPGPGFLEG. Residues 249–271 traverse the membrane as a helical segment; that stretch reads FSGWAVLVVLNQAVNGLLMSAVM. Over 272-279 the chain is Lumenal; the sequence is KHGSSITR. A helical transmembrane segment spans residues 280–300; it reads LFIVSCSLVVNAVLSAVLLQL. Topologically, residues 301-324 are cytoplasmic; the sequence is QLTAIFFLAALLIGLAVCLYYGSP.

This sequence belongs to the nucleotide-sugar transporter family. SLC35A subfamily. As to quaternary structure, found in a complex with SLC35A2 and SLC35A3.

It localises to the golgi apparatus membrane. It carries out the reaction CDP-L-ribitol(in) + CDP(out) = CDP-L-ribitol(out) + CDP(in). Its function is as follows. Mediates the transport of CDP-ribitol. Does not exhibit CMP-sialic acid, UDP-galactose and UDP-N-acetylglucosamine transport activity. The polypeptide is Probable UDP-sugar transporter protein SLC35A4 (Mus musculus (Mouse)).